Here is a 594-residue protein sequence, read N- to C-terminus: UvrABC system protein C (594 aa).

A GIY-YIG domain is found at 17–94; the sequence is LEPGCYLMKD…IKQYQPRYNI (78 aa). Residues 199–234 form the UVR domain; the sequence is KTILHHLEDRMNKASEQLDFEQAKEYRDMIQHIHNL.

This sequence belongs to the UvrC family. In terms of assembly, interacts with UvrB in an incision complex.

The protein localises to the cytoplasm. The UvrABC repair system catalyzes the recognition and processing of DNA lesions. UvrC both incises the 5' and 3' sides of the lesion. The N-terminal half is responsible for the 3' incision and the C-terminal half is responsible for the 5' incision. The chain is UvrABC system protein C from Staphylococcus epidermidis (strain ATCC 12228 / FDA PCI 1200).